Consider the following 541-residue polypeptide: Membrane protein insertase YidC (541 aa).

A run of 5 helical transmembrane segments spans residues L7–Y27, L345–Y365, L415–F435, L453–L473, and F492–W512.

It belongs to the OXA1/ALB3/YidC family. Type 1 subfamily. As to quaternary structure, interacts with the Sec translocase complex via SecD. Specifically interacts with transmembrane segments of nascent integral membrane proteins during membrane integration.

It localises to the cell inner membrane. Required for the insertion and/or proper folding and/or complex formation of integral membrane proteins into the membrane. Involved in integration of membrane proteins that insert both dependently and independently of the Sec translocase complex, as well as at least some lipoproteins. Aids folding of multispanning membrane proteins. The chain is Membrane protein insertase YidC from Histophilus somni (strain 2336) (Haemophilus somnus).